A 105-amino-acid polypeptide reads, in one-letter code: Thioredoxin (105 aa).

One can recognise a Thioredoxin domain in the interval 2-105; it reads VKQIESKTAF…KLEATINELV (104 aa). At lysine 3 the chain carries N6-acetyllysine. Lysine 8 carries the N6-succinyllysine modification. Catalysis depends on nucleophile residues cysteine 32 and cysteine 35. Cysteine 32 and cysteine 35 are disulfide-bonded. At lysine 39 the chain carries N6-acetyllysine. S-nitrosocysteine is present on residues cysteine 62 and cysteine 69. Cysteine 73 carries the S-nitrosocysteine; alternate modification. Position 94 is an N6-acetyllysine; alternate (lysine 94). Lysine 94 bears the N6-succinyllysine; alternate mark.

Belongs to the thioredoxin family. In terms of assembly, homodimer; disulfide-linked. Interacts with TXNIP through the redox-active site. Interacts with MAP3K5 and CASP3. In case of infection, interacts with S.typhimurium protein slrP. Interacts with APEX1; the interaction stimulates the FOS/JUN AP-1 DNA-binding activity in a redox-dependent manner. Post-translationally, in the fully reduced protein, both Cys-69 and Cys-73 are nitrosylated in response to nitric oxide (NO). When two disulfide bonds are present in the protein, only Cys-73 is nitrosylated. Cys-73 can serve as donor for nitrosylation of target proteins. In case of infection, ubiquitinated by S.typhimurium protein slrP, leading to its degradation.

The protein resides in the nucleus. The protein localises to the cytoplasm. Its subcellular location is the secreted. Its function is as follows. Participates in various redox reactions through the reversible oxidation of its active center dithiol to a disulfide and catalyzes dithiol-disulfide exchange reactions. Plays a role in the reversible S-nitrosylation of cysteine residues in target proteins, and thereby contributes to the response to intracellular nitric oxide. Nitrosylates the active site Cys of CASP3 in response to nitric oxide (NO), and thereby inhibits caspase-3 activity. Induces the FOS/JUN AP-1 DNA-binding activity in ionizing radiation (IR) cells through its oxidation/reduction status and stimulates AP-1 transcriptional activity. In terms of biological role, ADF augments the expression of the interleukin-2 receptor TAC (IL2R/P55). This Homo sapiens (Human) protein is Thioredoxin (TXN).